The following is a 1438-amino-acid chain: DNA polymerase III PolC-type (1438 aa).

Residues 422 to 578 form the Exonuclease domain; the sequence is YVVFDVETTG…YDTEATAYIF (157 aa).

It belongs to the DNA polymerase type-C family. PolC subfamily.

It is found in the cytoplasm. It carries out the reaction DNA(n) + a 2'-deoxyribonucleoside 5'-triphosphate = DNA(n+1) + diphosphate. Its function is as follows. Required for replicative DNA synthesis. This DNA polymerase also exhibits 3' to 5' exonuclease activity. This Staphylococcus aureus (strain bovine RF122 / ET3-1) protein is DNA polymerase III PolC-type.